The chain runs to 615 residues: Dihydroxy-acid dehydratase (615 aa).

Asp-81 is a binding site for Mg(2+). Position 122 (Cys-122) interacts with [2Fe-2S] cluster. Mg(2+)-binding residues include Asp-123 and Lys-124. N6-carboxylysine is present on Lys-124. Position 195 (Cys-195) interacts with [2Fe-2S] cluster. Glu-491 is a Mg(2+) binding site. Ser-517 functions as the Proton acceptor in the catalytic mechanism.

The protein belongs to the IlvD/Edd family. In terms of assembly, homodimer. It depends on [2Fe-2S] cluster as a cofactor. Mg(2+) is required as a cofactor.

It catalyses the reaction (2R)-2,3-dihydroxy-3-methylbutanoate = 3-methyl-2-oxobutanoate + H2O. The catalysed reaction is (2R,3R)-2,3-dihydroxy-3-methylpentanoate = (S)-3-methyl-2-oxopentanoate + H2O. It functions in the pathway amino-acid biosynthesis; L-isoleucine biosynthesis; L-isoleucine from 2-oxobutanoate: step 3/4. Its pathway is amino-acid biosynthesis; L-valine biosynthesis; L-valine from pyruvate: step 3/4. Functions in the biosynthesis of branched-chain amino acids. Catalyzes the dehydration of (2R,3R)-2,3-dihydroxy-3-methylpentanoate (2,3-dihydroxy-3-methylvalerate) into 2-oxo-3-methylpentanoate (2-oxo-3-methylvalerate) and of (2R)-2,3-dihydroxy-3-methylbutanoate (2,3-dihydroxyisovalerate) into 2-oxo-3-methylbutanoate (2-oxoisovalerate), the penultimate precursor to L-isoleucine and L-valine, respectively. This chain is Dihydroxy-acid dehydratase, found in Shewanella piezotolerans (strain WP3 / JCM 13877).